The following is a 102-amino-acid chain: Large ribosomal subunit protein bL21 (102 aa).

Belongs to the bacterial ribosomal protein bL21 family. As to quaternary structure, part of the 50S ribosomal subunit. Contacts protein L20.

Functionally, this protein binds to 23S rRNA in the presence of protein L20. The polypeptide is Large ribosomal subunit protein bL21 (Campylobacter lari (strain RM2100 / D67 / ATCC BAA-1060)).